A 277-amino-acid chain; its full sequence is Thiazole synthase (277 aa).

The active-site Schiff-base intermediate with DXP is lysine 116. Residues glycine 177, 203–204 (AG), and 225–226 (NT) each bind 1-deoxy-D-xylulose 5-phosphate.

The protein belongs to the ThiG family. As to quaternary structure, homotetramer. Forms heterodimers with either ThiH or ThiS.

Its subcellular location is the cytoplasm. It carries out the reaction [ThiS sulfur-carrier protein]-C-terminal-Gly-aminoethanethioate + 2-iminoacetate + 1-deoxy-D-xylulose 5-phosphate = [ThiS sulfur-carrier protein]-C-terminal Gly-Gly + 2-[(2R,5Z)-2-carboxy-4-methylthiazol-5(2H)-ylidene]ethyl phosphate + 2 H2O + H(+). The protein operates within cofactor biosynthesis; thiamine diphosphate biosynthesis. Catalyzes the rearrangement of 1-deoxy-D-xylulose 5-phosphate (DXP) to produce the thiazole phosphate moiety of thiamine. Sulfur is provided by the thiocarboxylate moiety of the carrier protein ThiS. In vitro, sulfur can be provided by H(2)S. This is Thiazole synthase from Thermosynechococcus vestitus (strain NIES-2133 / IAM M-273 / BP-1).